Consider the following 180-residue polypeptide: Large ribosomal subunit protein uL5c (180 aa).

The protein belongs to the universal ribosomal protein uL5 family. In terms of assembly, part of the 50S ribosomal subunit; contacts the 5S rRNA.

Its subcellular location is the plastid. The protein localises to the chloroplast. Binds 5S rRNA, forms part of the central protuberance of the 50S subunit. This Chlorella vulgaris (Green alga) protein is Large ribosomal subunit protein uL5c (rpl5).